A 304-amino-acid chain; its full sequence is Xylanase inhibitor protein 1 (304 aa).

The signal sequence occupies residues 1–29 (MVALGRRSWLVPLAMVLAVSSCLAGPAMA). The GH18 domain maps to 34 to 304 (GQMTVFWGRN…GYGKTVKYWA (271 aa)). 2 cysteine pairs are disulfide-bonded: cysteine 53/cysteine 93 and cysteine 190/cysteine 219.

Belongs to the glycosyl hydrolase 18 family. Xylanase inhibitor subfamily. As to quaternary structure, binds to fungal GH11 xylanases. As to expression, constitutively expressed in shoots.

The protein localises to the secreted. In terms of biological role, fungal xylanase inhibitor. Possesses competitive inhibiting activity against fungal endo-1,4-beta-D-xylanases belonging to glycoside hydrolase family 11 (GH11). May function in plant defense against secreted fungal pathogen xylanases. Is similar to class III chitinases, but does not exhibit chitinase activity. The chain is Xylanase inhibitor protein 1 from Oryza sativa subsp. japonica (Rice).